Here is a 232-residue protein sequence, read N- to C-terminus: Ribose-5-phosphate isomerase A (232 aa).

Substrate contacts are provided by residues 31 to 34 (TGST), 87 to 90 (DGAD), and 100 to 103 (KGGG). Residue E109 is the Proton acceptor of the active site. K127 serves as a coordination point for substrate.

This sequence belongs to the ribose 5-phosphate isomerase family. As to quaternary structure, homodimer.

The catalysed reaction is aldehydo-D-ribose 5-phosphate = D-ribulose 5-phosphate. Its pathway is carbohydrate degradation; pentose phosphate pathway; D-ribose 5-phosphate from D-ribulose 5-phosphate (non-oxidative stage): step 1/1. Catalyzes the reversible conversion of ribose-5-phosphate to ribulose 5-phosphate. The protein is Ribose-5-phosphate isomerase A of Bifidobacterium adolescentis (strain ATCC 15703 / DSM 20083 / NCTC 11814 / E194a).